Consider the following 376-residue polypeptide: Succinyl-diaminopimelate desuccinylase (376 aa).

Position 66 (histidine 66) interacts with Zn(2+). Aspartate 68 is an active-site residue. Aspartate 99 serves as a coordination point for Zn(2+). Glutamate 133 acts as the Proton acceptor in catalysis. 3 residues coordinate Zn(2+): glutamate 134, glutamate 162, and histidine 348.

Belongs to the peptidase M20A family. DapE subfamily. In terms of assembly, homodimer. Zn(2+) serves as cofactor. Requires Co(2+) as cofactor.

The enzyme catalyses N-succinyl-(2S,6S)-2,6-diaminopimelate + H2O = (2S,6S)-2,6-diaminopimelate + succinate. It functions in the pathway amino-acid biosynthesis; L-lysine biosynthesis via DAP pathway; LL-2,6-diaminopimelate from (S)-tetrahydrodipicolinate (succinylase route): step 3/3. Functionally, catalyzes the hydrolysis of N-succinyl-L,L-diaminopimelic acid (SDAP), forming succinate and LL-2,6-diaminopimelate (DAP), an intermediate involved in the bacterial biosynthesis of lysine and meso-diaminopimelic acid, an essential component of bacterial cell walls. This is Succinyl-diaminopimelate desuccinylase from Nitrosococcus oceani (strain ATCC 19707 / BCRC 17464 / JCM 30415 / NCIMB 11848 / C-107).